The chain runs to 66 residues: Large ribosomal subunit protein uL29 (66 aa).

Belongs to the universal ribosomal protein uL29 family.

In Thermococcus gammatolerans (strain DSM 15229 / JCM 11827 / EJ3), this protein is Large ribosomal subunit protein uL29.